Reading from the N-terminus, the 71-residue chain is ATP synthase F(0) complex subunit e, mitochondrial (71 aa).

K34 carries the N6-acetyllysine modification. The residue at position 68 (S68) is a Phosphoserine.

This sequence belongs to the ATPase e subunit family. Component of the ATP synthase complex composed at least of ATP5F1A/subunit alpha, ATP5F1B/subunit beta, ATP5MC1/subunit c (homooctomer), MT-ATP6/subunit a, MT-ATP8/subunit 8, ATP5ME/subunit e, ATP5MF/subunit f, ATP5MG/subunit g, ATP5MK/subunit k, ATP5MJ/subunit j, ATP5F1C/subunit gamma, ATP5F1D/subunit delta, ATP5F1E/subunit epsilon, ATP5PF/subunit F6, ATP5PB/subunit b, ATP5PD/subunit d, ATP5PO/subunit OSCP. ATP synthase complex consists of a soluble F(1) head domain (subunits alpha(3) and beta(3)) - the catalytic core - and a membrane F(0) domain - the membrane proton channel (subunits c, a, 8, e, f, g, k and j). These two domains are linked by a central stalk (subunits gamma, delta, and epsilon) rotating inside the F1 region and a stationary peripheral stalk (subunits F6, b, d, and OSCP).

Its subcellular location is the mitochondrion. It is found in the mitochondrion inner membrane. Its function is as follows. Subunit e, of the mitochondrial membrane ATP synthase complex (F(1)F(0) ATP synthase or Complex V) that produces ATP from ADP in the presence of a proton gradient across the membrane which is generated by electron transport complexes of the respiratory chain. ATP synthase complex consist of a soluble F(1) head domain - the catalytic core - and a membrane F(1) domain - the membrane proton channel. These two domains are linked by a central stalk rotating inside the F(1) region and a stationary peripheral stalk. During catalysis, ATP synthesis in the catalytic domain of F(1) is coupled via a rotary mechanism of the central stalk subunits to proton translocation. In vivo, can only synthesize ATP although its ATP hydrolase activity can be activated artificially in vitro. Part of the complex F(0) domain. The protein is ATP synthase F(0) complex subunit e, mitochondrial of Pongo abelii (Sumatran orangutan).